We begin with the raw amino-acid sequence, 1048 residues long: Anguibactin system regulator (1048 aa).

Positions 965-1039 (PIITASEDRV…AFAIIMDRCR (75 aa)) constitute a Carrier domain.

Belongs to the ATP-dependent AMP-binding enzyme family.

The protein operates within siderophore biosynthesis; anguibactin biosynthesis. In terms of biological role, bifunctional protein that plays an essential role in virulence. Plays a role in both production of the siderophore anguibactin and regulation of iron transport genes. The sequence is that of Anguibactin system regulator (angR) from Vibrio anguillarum (strain ATCC 68554 / 775) (Listonella anguillarum).